A 500-amino-acid polypeptide reads, in one-letter code: NAD(P)H-quinone oxidoreductase chain 4, chloroplastic (500 aa).

14 helical membrane passes run 4–24, 37–57, 87–107, 113–130, 134–154, 167–187, 207–227, 242–262, 272–292, 305–325, 330–350, 386–406, 411–431, and 462–482; these read FPWL…IFFL, ICIC…HFQL, IGPI…AWPV, LFHF…GSFS, LLLF…LLSM, FILY…GIGL, IALE…KSPI, HYST…YGLV, AHSL…IYAA, IAYS…SITD, GAIL…FLAG, LALP…GIIT, FLMA…LTPI, and LFVS…PDFL.

The protein belongs to the complex I subunit 4 family.

The protein resides in the plastid. It is found in the chloroplast thylakoid membrane. It carries out the reaction a plastoquinone + NADH + (n+1) H(+)(in) = a plastoquinol + NAD(+) + n H(+)(out). The catalysed reaction is a plastoquinone + NADPH + (n+1) H(+)(in) = a plastoquinol + NADP(+) + n H(+)(out). The chain is NAD(P)H-quinone oxidoreductase chain 4, chloroplastic from Carica papaya (Papaya).